A 262-amino-acid chain; its full sequence is Phosphatidylserine decarboxylase proenzyme (262 aa).

Catalysis depends on charge relay system; for autoendoproteolytic cleavage activity residues D86, H142, and S226. Residue S226 is the Schiff-base intermediate with substrate; via pyruvic acid; for decarboxylase activity of the active site. S226 carries the pyruvic acid (Ser); by autocatalysis modification.

Belongs to the phosphatidylserine decarboxylase family. PSD-B subfamily. Prokaryotic type I sub-subfamily. Heterodimer of a large membrane-associated beta subunit and a small pyruvoyl-containing alpha subunit. Pyruvate serves as cofactor. In terms of processing, is synthesized initially as an inactive proenzyme. Formation of the active enzyme involves a self-maturation process in which the active site pyruvoyl group is generated from an internal serine residue via an autocatalytic post-translational modification. Two non-identical subunits are generated from the proenzyme in this reaction, and the pyruvate is formed at the N-terminus of the alpha chain, which is derived from the carboxyl end of the proenzyme. The autoendoproteolytic cleavage occurs by a canonical serine protease mechanism, in which the side chain hydroxyl group of the serine supplies its oxygen atom to form the C-terminus of the beta chain, while the remainder of the serine residue undergoes an oxidative deamination to produce ammonia and the pyruvoyl prosthetic group on the alpha chain. During this reaction, the Ser that is part of the protease active site of the proenzyme becomes the pyruvoyl prosthetic group, which constitutes an essential element of the active site of the mature decarboxylase.

Its subcellular location is the cell membrane. It carries out the reaction a 1,2-diacyl-sn-glycero-3-phospho-L-serine + H(+) = a 1,2-diacyl-sn-glycero-3-phosphoethanolamine + CO2. It functions in the pathway phospholipid metabolism; phosphatidylethanolamine biosynthesis; phosphatidylethanolamine from CDP-diacylglycerol: step 2/2. In terms of biological role, catalyzes the formation of phosphatidylethanolamine (PtdEtn) from phosphatidylserine (PtdSer). This Bacillus anthracis protein is Phosphatidylserine decarboxylase proenzyme.